The primary structure comprises 476 residues: Zinc finger CCCH domain-containing protein 6 (476 aa).

The span at 1 to 10 shows a compositional bias: low complexity; the sequence is MEQPHAAAAA. Residues 1-57 form a disordered region; it reads MEQPHAAAAAAGGGEGEGGASPDTGLEGPMWRMGLGGGGGGGGGGGGGDGDAAGRLP. The span at 34–51 shows a compositional bias: gly residues; sequence GLGGGGGGGGGGGGGDGD. 3 consecutive C3H1-type zinc fingers follow at residues 59–87, 108–136, and 153–181; these read RPGEEDCVYYLRTGACGFGDRCRYNHPRD, RAGQPICEYYMKTGTCKFGTNCKYHHPKQ, and RLGEKECSYYMKTGQCKFGTTCKFHHPEF. The segment covering 290-301 has biased composition (polar residues); sequence SSTGQSSNNQQE. The interval 290 to 309 is disordered; sequence SSTGQSSNNQQEHGFPERPG. C3H1-type zinc fingers lie at residues 307–335 and 353–381; these read RPGQPDCQYYMRTGDCKFGATCKYHHPRE and RPGAQPCAYYAQNGYCRYGVACKYDHPMG. Positions 456–476 are disordered; that stretch reads TMMRAQTNTTSGGSSSPGGGR.

It localises to the nucleus. In Oryza sativa subsp. japonica (Rice), this protein is Zinc finger CCCH domain-containing protein 6.